Reading from the N-terminus, the 553-residue chain is Solute carrier family 2, facilitated glucose transporter member 10 (553 aa).

The Cytoplasmic segment spans residues 1 to 15 (MGLRSTTLVLAATSS). The chain crosses the membrane as a helical span at residues 16 to 36 (LLGGLIFGYELGIISGALLML). At 37–48 (KTVFQLTCFEQE) the chain is on the extracellular side. The chain crosses the membrane as a helical span at residues 49–69 (ALVSAVLFGALLASLIGGFII). Residues 70 to 82 (DRSGRRTSIMGSN) lie on the Cytoplasmic side of the membrane. A helical membrane pass occupies residues 83–103 (LVVLAGSIILIATSSFWWLVV). The Extracellular segment spans residues 104–105 (GR). The helical transmembrane segment at 106-126 (VTVGFAISISSMACCIYVSEI) threads the bilayer. At 127–132 (VRPHQR) the chain is on the cytoplasmic side. The helical transmembrane segment at 133–153 (GTLVSLYETGITVGILISYAM) threads the bilayer. At 154-165 (NYFLSAVNDGWK) the chain is on the extracellular side. A helical membrane pass occupies residues 166–186 (YMFGLAIIPAAFQFIVILFLP). Topologically, residues 187 to 240 (SKPHTLNFWEQDSDNGFIELEEAGESGEFKPDTYDKQYTFLDLFRSKDNMRTRT) are cytoplasmic. A helical membrane pass occupies residues 241–261 (LLGLGLVLFQQFTGQPNVLYY). 250 to 251 (QQ) contributes to the D-glucose binding site. Residues 262-277 (ASTIFRSVGFQSNSSA) are Extracellular-facing. The N-linked (GlcNAc...) asparagine glycan is linked to Asn274. A helical membrane pass occupies residues 278–298 (VLASVGLGVVKVASTLIAICF). Topologically, residues 299–305 (ADKAGRR) are cytoplasmic. Residues 306-326 (ILLLAGCIVMTIAISGIGIVS) form a helical membrane-spanning segment. Residues 327-413 (FMVELDSHRD…PPAGPDSNYA (87 aa)) lie on the Extracellular side of the membrane. N-linked (GlcNAc...) asparagine glycans are attached at residues Asn344, Asn351, and Asn400. Residues 414–434 (ILNWITLLSMMAFVSAFSIGF) traverse the membrane as a helical segment. The Cytoplasmic segment spans residues 435-462 (GPMTWLVLSEIYPADIRGRAFAFCNSFN). Residue Trp439 participates in D-glucose binding. A helical membrane pass occupies residues 463-482 (WAANLLITLTFLEVIGSIGL). Gly483 is a topological domain (extracellular). A helical membrane pass occupies residues 484-504 (WTFLLYGGVGLLAIAFIYFFI). The Cytoplasmic segment spans residues 505 to 553 (PETKGQSLEEIDQQLSSKRISKRRETSKGVRKRPSTGPPYQRVGKSNWT). Residues 522 to 553 (KRISKRRETSKGVRKRPSTGPPYQRVGKSNWT) form a disordered region.

This sequence belongs to the major facilitator superfamily. Sugar transporter (TC 2.A.1.1) family. Glucose transporter subfamily.

The protein localises to the endomembrane system. It localises to the cytoplasm. The protein resides in the perinuclear region. The enzyme catalyses D-glucose(out) = D-glucose(in). In terms of biological role, facilitative glucose transporter required for the development of the cardiovascular system. The protein is Solute carrier family 2, facilitated glucose transporter member 10 of Xenopus laevis (African clawed frog).